We begin with the raw amino-acid sequence, 76 residues long: UPF0729 protein C18orf32 homolog (76 aa).

The tract at residues 1–37 (MVCIPCIVIPVLLWVYKKFLEPYIYPLISPFVSRMWP) is necessary for its localzation to the endoplasmic reticulum and lipid droplets. Positions 47–56 (KNKGKVDYKG) are enriched in basic and acidic residues. Residues 47-76 (KNKGKVDYKGADINGLPTRGPTEMCDKKKD) form a disordered region.

This sequence belongs to the UPF0729 family. Interacts with DERL1 and AMFR. Post-translationally, undergoes ER-associated degradation (ERAD).

The protein localises to the endoplasmic reticulum. It localises to the lipid droplet. Functionally, may activate the NF-kappa-B signaling pathway. The protein is UPF0729 protein C18orf32 homolog of Bos taurus (Bovine).